Consider the following 1400-residue polypeptide: DNA-directed RNA polymerase subunit beta' (1400 aa).

4 residues coordinate Zn(2+): Cys71, Cys73, Cys86, and Cys89. Asp462, Asp464, and Asp466 together coordinate Mg(2+). Residues Cys811, Cys885, Cys892, and Cys895 each contribute to the Zn(2+) site.

The protein belongs to the RNA polymerase beta' chain family. As to quaternary structure, the RNAP catalytic core consists of 2 alpha, 1 beta, 1 beta' and 1 omega subunit. When a sigma factor is associated with the core the holoenzyme is formed, which can initiate transcription. It depends on Mg(2+) as a cofactor. Requires Zn(2+) as cofactor.

The enzyme catalyses RNA(n) + a ribonucleoside 5'-triphosphate = RNA(n+1) + diphosphate. DNA-dependent RNA polymerase catalyzes the transcription of DNA into RNA using the four ribonucleoside triphosphates as substrates. The protein is DNA-directed RNA polymerase subunit beta' of Brucella ovis (strain ATCC 25840 / 63/290 / NCTC 10512).